The sequence spans 168 residues: Envelope glycoprotein L (168 aa).

Residues 1 to 22 (MMWKWVTLLLFVLVCGDNPVNA) form the signal peptide. The interval 25 to 138 (HNPFVCCHQK…TDSSGFKNNL (114 aa)) is interaction with gH.

The protein belongs to the herpesviridae glycoprotein L family. In terms of assembly, interacts with glycoprotein H (gH); this interaction is necessary for the correct processing and cell surface expression of gH. The heterodimer gH/gL seems to interact with gB trimers during fusion.

It localises to the virion membrane. The protein resides in the host cell membrane. It is found in the host Golgi apparatus. The protein localises to the host trans-Golgi network. Its function is as follows. The heterodimer glycoprotein H-glycoprotein L is required for the fusion of viral and plasma membranes leading to virus entry into the host cell. Acts as a functional inhibitor of gH and maintains gH in an inhibited form. Upon binding to host integrins, gL dissociates from gH leading to activation of the viral fusion glycoproteins gB and gH. This is Envelope glycoprotein L from Connochaetes taurinus (Blue wildebeest).